The following is a 292-amino-acid chain: Chondroitin proteoglycan 3 (292 aa).

A signal peptide spans Met1–Ala17. The disordered stretch occupies residues Asp28 to Val103. The segment covering Gly38–Ser80 has biased composition (low complexity). Positions Ser81–Ser96 are enriched in acidic residues. 2 N-linked (GlcNAc...) asparagine glycosylation sites follow: Asn174 and Asn254.

The chain is Chondroitin proteoglycan 3 from Caenorhabditis elegans.